Here is a 73-residue protein sequence, read N- to C-terminus: Translational regulator CsrA (73 aa).

Belongs to the CsrA/RsmA family. Homodimer; the beta-strands of each monomer intercalate to form a hydrophobic core, while the alpha-helices form wings that extend away from the core.

It is found in the cytoplasm. In terms of biological role, a translational regulator that binds mRNA to regulate translation initiation and/or mRNA stability. Usually binds in the 5'-UTR at or near the Shine-Dalgarno sequence preventing ribosome-binding, thus repressing translation. Its main target seems to be the major flagellin gene, while its function is anatagonized by FliW. The chain is Translational regulator CsrA from Lachnospira eligens (strain ATCC 27750 / DSM 3376 / VPI C15-48 / C15-B4) (Eubacterium eligens).